We begin with the raw amino-acid sequence, 200 residues long: Imidazole glycerol phosphate synthase subunit HisH (200 aa).

In terms of domain architecture, Glutamine amidotransferase type-1 spans 3–200 (EVALIDAGGA…LRNFLEMDAA (198 aa)). Residue cysteine 78 is the Nucleophile of the active site. Active-site residues include histidine 179 and glutamate 181.

Heterodimer of HisH and HisF.

Its subcellular location is the cytoplasm. It catalyses the reaction 5-[(5-phospho-1-deoxy-D-ribulos-1-ylimino)methylamino]-1-(5-phospho-beta-D-ribosyl)imidazole-4-carboxamide + L-glutamine = D-erythro-1-(imidazol-4-yl)glycerol 3-phosphate + 5-amino-1-(5-phospho-beta-D-ribosyl)imidazole-4-carboxamide + L-glutamate + H(+). The enzyme catalyses L-glutamine + H2O = L-glutamate + NH4(+). The protein operates within amino-acid biosynthesis; L-histidine biosynthesis; L-histidine from 5-phospho-alpha-D-ribose 1-diphosphate: step 5/9. In terms of biological role, IGPS catalyzes the conversion of PRFAR and glutamine to IGP, AICAR and glutamate. The HisH subunit catalyzes the hydrolysis of glutamine to glutamate and ammonia as part of the synthesis of IGP and AICAR. The resulting ammonia molecule is channeled to the active site of HisF. This chain is Imidazole glycerol phosphate synthase subunit HisH, found in Xylella fastidiosa (strain Temecula1 / ATCC 700964).